The sequence spans 162 residues: L-amino acid N-acetyltransferase AaaT (162 aa).

In terms of domain architecture, N-acetyltransferase spans 4–162; that stretch reads IVIRHAETRD…VDAYYMARVK (159 aa).

This sequence belongs to the acetyltransferase family.

It catalyses the reaction L-phenylalanine + acetyl-CoA = N-acetyl-L-phenylalanine + CoA + H(+). The catalysed reaction is L-methionine + acetyl-CoA = N-acetyl-L-methionine + CoA + H(+). Catalyzes the N-acetylation of L-phenylalanine and L-methionine using acetyl-CoA as acetyl donor in vitro. Cannot accept L-tyrosine as substrate and propionyl-CoA, succinyl-CoA or (S)-methylmalonyl-CoA as acyl donors. Is also able to acetylate and thus detoxify several nonhydrolyzable aminoacyl adenylates, but not the processed form of the peptide-nucleotide antibiotic microcin C (McC). When overproduced, provides complete resistance to leucyl sulfamoyl adenylate (LSA) and partial resistance to alanyl sulfamoyl adenylate (ASA) and phenylalanyl sulfamoyl adenylate (FSA). Therefore, may protect bacteria from various toxic aminoacyl nucleotides, either exogenous or those generated inside the cell during normal metabolism. This is L-amino acid N-acetyltransferase AaaT from Escherichia coli (strain K12).